Here is a 323-residue protein sequence, read N- to C-terminus: o-succinylbenzoate synthase (323 aa).

The active-site Proton donor is the Lys134. Mg(2+)-binding residues include Asp162, Glu191, and Asp214. Residue Lys236 is the Proton acceptor of the active site.

Belongs to the mandelate racemase/muconate lactonizing enzyme family. MenC type 1 subfamily. The cofactor is a divalent metal cation.

The catalysed reaction is (1R,6R)-6-hydroxy-2-succinyl-cyclohexa-2,4-diene-1-carboxylate = 2-succinylbenzoate + H2O. It functions in the pathway quinol/quinone metabolism; 1,4-dihydroxy-2-naphthoate biosynthesis; 1,4-dihydroxy-2-naphthoate from chorismate: step 4/7. It participates in quinol/quinone metabolism; menaquinone biosynthesis. In terms of biological role, converts 2-succinyl-6-hydroxy-2,4-cyclohexadiene-1-carboxylate (SHCHC) to 2-succinylbenzoate (OSB). The chain is o-succinylbenzoate synthase from Edwardsiella ictaluri (strain 93-146).